Consider the following 615-residue polypeptide: DNA mismatch repair protein MutL (615 aa).

Positions 363-397 (FAEPAVREPVAPRYTPAPASGSRPAAPWPNAQPGY) are disordered. The segment covering 378-391 (PAPASGSRPAAPWP) has biased composition (low complexity).

This sequence belongs to the DNA mismatch repair MutL/HexB family.

Functionally, this protein is involved in the repair of mismatches in DNA. It is required for dam-dependent methyl-directed DNA mismatch repair. May act as a 'molecular matchmaker', a protein that promotes the formation of a stable complex between two or more DNA-binding proteins in an ATP-dependent manner without itself being part of a final effector complex. In Escherichia coli O157:H7 (strain EC4115 / EHEC), this protein is DNA mismatch repair protein MutL.